The sequence spans 694 residues: Polyphosphate kinase (694 aa).

An ATP-binding site is contributed by Asn45. The Mg(2+) site is built by Arg367 and Arg397. His427 functions as the Phosphohistidine intermediate in the catalytic mechanism. ATP is bound by residues Tyr460, Arg553, and His580.

The protein belongs to the polyphosphate kinase 1 (PPK1) family. Mg(2+) is required as a cofactor. In terms of processing, an intermediate of this reaction is the autophosphorylated ppk in which a phosphate is covalently linked to a histidine residue through a N-P bond.

The catalysed reaction is [phosphate](n) + ATP = [phosphate](n+1) + ADP. Functionally, catalyzes the reversible transfer of the terminal phosphate of ATP to form a long-chain polyphosphate (polyP). The protein is Polyphosphate kinase of Campylobacter jejuni subsp. doylei (strain ATCC BAA-1458 / RM4099 / 269.97).